The primary structure comprises 400 residues: Mu-type opioid receptor (400 aa).

The Extracellular segment spans residues 1–68; that stretch reads MDSSAAPTNA…CPPTGSPSMI (68 aa). Residues Asn-9, Asn-12, Asn-33, Asn-40, and Asn-48 are each glycosylated (N-linked (GlcNAc...) asparagine). A helical membrane pass occupies residues 69–93; the sequence is TAITIMALYSIVCVVGLFGNFLVMY. The Cytoplasmic portion of the chain corresponds to 94 to 106; it reads VIVRYTKMKTATN. Residues 107–131 traverse the membrane as a helical segment; that stretch reads IYIFNLALADALATSTLPFQSVNYL. Over 132-142 the chain is Extracellular; that stretch reads MGTWPFGTILC. An intrachain disulfide couples Cys-142 to Cys-219. A helical membrane pass occupies residues 143 to 165; sequence KIVISIDYYNMFTSIFTLCTMSV. Topologically, residues 166–185 are cytoplasmic; the sequence is DRYIAVCHPVKALDFRTPRN. Tyr-168 carries the phosphotyrosine modification. Residues 186–207 form a helical membrane-spanning segment; sequence AKIINVCNWILSSAIGLPVMFM. At 208–230 the chain is on the extracellular side; sequence ATTKYRQGSIDCTLTFSHPTWYW. Residues 231-255 traverse the membrane as a helical segment; it reads ENLLKICVFIFAFIMPVLIITVCYG. Over 256–279 the chain is Cytoplasmic; the sequence is LMILRLKSVRMLSGSKEKDRNLRR. Residues 280-306 traverse the membrane as a helical segment; that stretch reads ITRMVLVVVAVFIVCWTPIHIYVIIKA. At 307-314 the chain is on the extracellular side; it reads LVTIPETT. Residues 315–338 traverse the membrane as a helical segment; it reads FQTVSWHFCIALGYTNSCLNPVLY. The short motif at 334–338 is the NPxxY; plays a role in stabilizing the activated conformation of the receptor element; sequence NPVLY. At 339-400 the chain is on the cytoplasmic side; it reads AFLDENFKRC…NLEAETAPLP (62 aa). A lipid anchor (S-palmitoyl cysteine) is attached at Cys-353. Position 365 is a phosphoserine (Ser-365). Thr-372 is subject to Phosphothreonine. Ser-377 bears the Phosphoserine mark. Thr-396 is subject to Phosphothreonine.

Belongs to the G-protein coupled receptor 1 family. In terms of assembly, forms homooligomers and heterooligomers with other GPCRs, such as OPRD1, OPRK1, OPRL1, NPFFR2, ADRA2A, SSTR2, CNR1 and CCR5 (probably in dimeric forms). Interacts with heterotrimeric G proteins; interaction with a heterotrimeric complex containing GNAI1, GNB1 and GNG2 stabilizes the active conformation of the receptor and increases its affinity for endomorphin-2, the synthetic opioid peptide DAMGO and for morphinan agonists. Interacts with PPL; the interaction disrupts agonist-mediated G-protein activation. Interacts (via C-terminus) with DNAJB4 (via C-terminus). Interacts with calmodulin; the interaction inhibits the constitutive activity of OPRM1; it abolishes basal and attenuates agonist-stimulated G-protein coupling. Interacts with FLNA, PLD2, RANBP9 and WLS and GPM6A. Interacts with RTP4. Interacts with SYP and GNAS. Interacts with RGS9, RGS17, RGS20, RGS4, PPP1R9B and HINT1. Phosphorylated. Differentially phosphorylated in basal and agonist-induced conditions. Agonist-mediated phosphorylation modulates receptor internalization. Phosphorylated by GRK2 in a agonist-dependent manner. Phosphorylation at Tyr-168 requires receptor activation, is dependent on non-receptor protein tyrosine kinase Src and results in a decrease in agonist efficacy by reducing G-protein coupling efficiency. Phosphorylated on tyrosine residues; the phosphorylation is involved in agonist-induced G-protein-independent receptor down-regulation. Phosphorylation at Ser-377 is involved in G-protein-dependent but not beta-arrestin-dependent activation of the ERK pathway. In terms of processing, ubiquitinated. A basal ubiquitination seems not to be related to degradation. Ubiquitination is increased upon formation of OPRM1:OPRD1 oligomers leading to proteasomal degradation; the ubiquitination is diminished by RTP4. As to expression, expressed in brain. Isoform 16 and isoform 17 are detected in brain.

Its subcellular location is the cell membrane. The protein localises to the cell projection. It is found in the axon. The protein resides in the perikaryon. It localises to the dendrite. Its subcellular location is the endosome. The protein localises to the cytoplasm. In terms of biological role, receptor for endogenous opioids such as beta-endorphin and endomorphin. Receptor for natural and synthetic opioids including morphine, heroin, DAMGO, fentanyl, etorphine, buprenorphin and methadone. Also activated by enkephalin peptides, such as Met-enkephalin or Met-enkephalin-Arg-Phe, with higher affinity for Met-enkephalin-Arg-Phe. Agonist binding to the receptor induces coupling to an inactive GDP-bound heterotrimeric G-protein complex and subsequent exchange of GDP for GTP in the G-protein alpha subunit leading to dissociation of the G-protein complex with the free GTP-bound G-protein alpha and the G-protein beta-gamma dimer activating downstream cellular effectors. The agonist- and cell type-specific activity is predominantly coupled to pertussis toxin-sensitive G(i) and G(o) G alpha proteins, GNAI1, GNAI2, GNAI3 and GNAO1 isoforms Alpha-1 and Alpha-2, and to a lesser extent to pertussis toxin-insensitive G alpha proteins GNAZ and GNA15. They mediate an array of downstream cellular responses, including inhibition of adenylate cyclase activity and both N-type and L-type calcium channels, activation of inward rectifying potassium channels, mitogen-activated protein kinase (MAPK), phospholipase C (PLC), phosphoinositide/protein kinase (PKC), phosphoinositide 3-kinase (PI3K) and regulation of NF-kappa-B. Also couples to adenylate cyclase stimulatory G alpha proteins. The selective temporal coupling to G-proteins and subsequent signaling can be regulated by RGSZ proteins, such as RGS9, RGS17 and RGS4. Phosphorylation by members of the GPRK subfamily of Ser/Thr protein kinases and association with beta-arrestins is involved in short-term receptor desensitization. Beta-arrestins associate with the GPRK-phosphorylated receptor and uncouple it from the G-protein thus terminating signal transduction. The phosphorylated receptor is internalized through endocytosis via clathrin-coated pits which involves beta-arrestins. The activation of the ERK pathway occurs either in a G-protein-dependent or a beta-arrestin-dependent manner and is regulated by agonist-specific receptor phosphorylation. Acts as a class A G-protein coupled receptor (GPCR) which dissociates from beta-arrestin at or near the plasma membrane and undergoes rapid recycling. Receptor down-regulation pathways are varying with the agonist and occur dependent or independent of G-protein coupling. Endogenous ligands induce rapid desensitization, endocytosis and recycling. Heterooligomerization with other GPCRs can modulate agonist binding, signaling and trafficking properties. Functionally, couples to GNAS and is proposed to be involved in excitatory effects. Does not bind agonists but may act through oligomerization with binding-competent OPRM1 isoforms and reduce their ligand binding activity. The sequence is that of Mu-type opioid receptor (OPRM1) from Homo sapiens (Human).